The chain runs to 174 residues: uncharacterized protein (174 aa).

2 helical membrane-spanning segments follow: residues Phe29–Tyr51 and Val66–Ile83.

The protein localises to the cell membrane. This is an uncharacterized protein from Bacillus subtilis (strain 168).